Reading from the N-terminus, the 489-residue chain is Probable cytochrome P450 522A1 (489 aa).

A helical membrane pass occupies residues 1-21 (MILTIVIIILTVIFVNKYLLN). Residue Cys-433 coordinates heme.

It belongs to the cytochrome P450 family. Requires heme as cofactor.

It is found in the membrane. The protein is Probable cytochrome P450 522A1 (cyp522A1) of Dictyostelium discoideum (Social amoeba).